The sequence spans 109 residues: Thiosulfate sulfurtransferase GlpE (109 aa).

In terms of domain architecture, Rhodanese spans 16-104 (RAEGAVVVDI…WRSTYPGETA (89 aa)). Cys-64 (cysteine persulfide intermediate) is an active-site residue.

The protein belongs to the GlpE family.

The protein resides in the cytoplasm. It catalyses the reaction thiosulfate + hydrogen cyanide = thiocyanate + sulfite + 2 H(+). The enzyme catalyses thiosulfate + [thioredoxin]-dithiol = [thioredoxin]-disulfide + hydrogen sulfide + sulfite + 2 H(+). Transferase that catalyzes the transfer of sulfur from thiosulfate to thiophilic acceptors such as cyanide or dithiols. May function in a CysM-independent thiosulfate assimilation pathway by catalyzing the conversion of thiosulfate to sulfite, which can then be used for L-cysteine biosynthesis. In Pseudomonas entomophila (strain L48), this protein is Thiosulfate sulfurtransferase GlpE.